The primary structure comprises 284 residues: 2-dehydro-3-deoxyphosphooctonate aldolase (284 aa).

It belongs to the KdsA family.

It localises to the cytoplasm. It catalyses the reaction D-arabinose 5-phosphate + phosphoenolpyruvate + H2O = 3-deoxy-alpha-D-manno-2-octulosonate-8-phosphate + phosphate. The protein operates within carbohydrate biosynthesis; 3-deoxy-D-manno-octulosonate biosynthesis; 3-deoxy-D-manno-octulosonate from D-ribulose 5-phosphate: step 2/3. Its pathway is bacterial outer membrane biogenesis; lipopolysaccharide biosynthesis. This is 2-dehydro-3-deoxyphosphooctonate aldolase from Vibrio vulnificus (strain CMCP6).